We begin with the raw amino-acid sequence, 217 residues long: 7-cyano-7-deazaguanine synthase (217 aa).

Leucine 7–leucine 17 is an ATP binding site. Residues cysteine 183, cysteine 191, cysteine 194, and cysteine 197 each contribute to the Zn(2+) site.

This sequence belongs to the QueC family. Requires Zn(2+) as cofactor.

It carries out the reaction 7-carboxy-7-deazaguanine + NH4(+) + ATP = 7-cyano-7-deazaguanine + ADP + phosphate + H2O + H(+). It participates in purine metabolism; 7-cyano-7-deazaguanine biosynthesis. In terms of biological role, catalyzes the ATP-dependent conversion of 7-carboxy-7-deazaguanine (CDG) to 7-cyano-7-deazaguanine (preQ(0)). The sequence is that of 7-cyano-7-deazaguanine synthase from Methanoregula boonei (strain DSM 21154 / JCM 14090 / 6A8).